A 764-amino-acid chain; its full sequence is Acylamino-acid-releasing enzyme (764 aa).

Catalysis depends on charge relay system residues Ser618, Asp707, and His739.

The protein belongs to the peptidase S9C family. As to quaternary structure, homotetramer.

It localises to the cytoplasm. The protein resides in the nucleus. The enzyme catalyses Cleavage of an N-acetyl or N-formyl amino acid from the N-terminus of a polypeptide.. Its activity is regulated as follows. Strongly inhibited by the serine protease inhibitor diisopropyl fluorophosphate. Functionally, catalyzes the hydrolysis of the N-terminal peptide bond of an N-acetylated peptide to generate an N-acetylated amino acid and a peptide with a free N-terminus. Can degrade the glycated RuBisCO (ribulose-1,5-bisphosphate carboxylase/oxygenase) protein but not the native protein. May be involved in the elimination of glycated proteins. Plays a homeostatic role in sustaining the cytoplasmic antioxidative system. May contribute to the elimination of the oxidized proteins in the cytoplasm. This Arabidopsis thaliana (Mouse-ear cress) protein is Acylamino-acid-releasing enzyme.